The sequence spans 170 residues: Cathelicidin antimicrobial peptide (170 aa).

Positions 1–30 are cleaved as a signal peptide; sequence MNTQWDSPSLGRWSLVLLLLGLVMPLAIVA. Residues 31–131 constitute a propeptide, cathelin-like domain (CLD); sequence QVLSYQEAVL…DISCDKDKRK (101 aa). 2 disulfide bridges follow: cysteine 86–cysteine 97 and cysteine 108–cysteine 125. The active core stretch occupies residues 150–162; that stretch reads LKNIGQRIKDFFG.

The protein belongs to the cathelicidin family. As to quaternary structure, monomer, homodimer or homotrimer (in vitro). Oligomerizes as tetra- or hexamer in solution (in vitro). Post-translationally, proteolytically cleaved by proteinase PRTN3 into antibacterial peptide LL-37. Proteolytically cleaved by cathepsin CTSG and neutrophil elastase ELANE. Resistant to proteolytic degradation in solution, and when bound to both zwitterionic (mimicking mammalian membranes) and negatively charged membranes (mimicking bacterial membranes). In terms of processing, after secretion onto the skin surface, the CAMP gene product is processed by a serine protease-dependent mechanism into multiple novel antimicrobial peptides distinct from and shorter than cathelicidin LL-37. These peptides show enhanced antimicrobial action, acquiring the ability to kill skin pathogens such as S.aureus, E.coli and C.albicans. These peptides have lost the ability to stimulate CXCL8/IL8 release from keratinocytes. The peptides act synergistically, killing bacteria at lower concentrations when present together, and maintain activity at increased salt condition.

The protein resides in the secreted. It localises to the vesicle. Functionally, antimicrobial protein that is an integral component of the innate immune system. Binds to bacterial lipopolysaccharides (LPS). Acts via neutrophil N-formyl peptide receptors to enhance the release of CXCL2. Postsecretory processing generates multiple cathelicidin antimicrobial peptides with various lengths which act as a topical antimicrobial defense in sweat on skin. The unprocessed precursor form, cathelicidin antimicrobial peptide, inhibits the growth of Gram-negative E.coli and E.aerogenes with efficiencies comparable to that of the mature peptide LL-37 (in vitro). Its function is as follows. Antimicrobial peptide that is an integral component of the innate immune system. Binds to bacterial lipopolysaccharides (LPS). Causes membrane permeabilization by forming transmembrane pores (in vitro). Causes lysis of E.coli. Exhibits antimicrobial activity against Gram-negative bacteria such as P.aeruginosa, S.typhimurium, E.aerogenes, E.coli and P.syringae, Gram-positive bacteria such as L.monocytogenes, S.epidermidis, S.pyogenes and S.aureus, as well as vancomycin-resistant enterococci (in vitro). Exhibits antimicrobial activity against methicillin-resistant S.aureus, P.mirabilis, and C.albicans in low-salt media, but not in media containing 100 mM NaCl (in vitro). Forms chiral supramolecular assemblies with quinolone signal (PQS) molecules of P.aeruginosa, which may lead to interference of bacterial quorum signaling and perturbance of bacterial biofilm formation. May form supramolecular fiber-like assemblies on bacterial membranes. Induces cytokine and chemokine producation as well as TNF/TNFA and CSF2/GMCSF production in normal human keratinocytes. Exhibits hemolytic activity against red blood cells. In terms of biological role, exhibits antimicrobial activity against E.coli and B.megaterium (in vitro). This Ateles fusciceps (Brown-headed spider monkey) protein is Cathelicidin antimicrobial peptide.